The following is a 541-amino-acid chain: Testis-specific chromodomain protein Y 2 (541 aa).

One can recognise a Chromo domain in the interval 6-66; sequence FEVEAIVDKR…RQTEKQKKLT (61 aa). The disordered stretch occupies residues 72-104; that stretch reads RIFSNNARRRTSRSTKANYSKNSPKTPVTDKHH. Polar residues predominate over residues 87–97; sequence KANYSKNSPKT.

Testis specific.

Its subcellular location is the nucleus. The enzyme catalyses L-lysyl-[protein] + acetyl-CoA = N(6)-acetyl-L-lysyl-[protein] + CoA + H(+). Functionally, may have histone acetyltransferase activity. In Homo sapiens (Human), this protein is Testis-specific chromodomain protein Y 2 (CDY2A).